The sequence spans 1762 residues: ADAMTS-like protein 1 (1762 aa).

Positions 1 to 28 are cleaved as a signal peptide; sequence MECCRRATPGTLLLFLAFLLLSSRTARS. The TSP type-1 1 domain occupies 33 to 82; that stretch reads DGLWDAWGPWSECSRTCGGGASYSLRRCLSSKSCEGRNIRYRTCSNVDCP. Residues Trp-39 and Trp-42 are each glycosylated (C-linked (Man) tryptophan). Disulfide bonds link Cys-45/Cys-76, Cys-49/Cys-81, and Cys-60/Cys-66. Thr-48 is a glycosylation site (O-linked (Fuc...) threonine). Asn-251 carries an N-linked (GlcNAc...) asparagine glycan. The O-linked (Fuc...) threonine glycan is linked to Thr-312. TSP type-1 domains are found at residues 376–424, 436–493, 522–584, 607–665, 666–729, and 788–850; these read PLPR…MYTP, DCPK…TPCY, EEPS…GPCS, ELYD…NLDP, CPAR…FNCP, and CPSE…ATCA. Ser-391 is a glycosylation site (O-linked (Fuc...) serine). O-linked (Fuc...) threonine glycosylation is present at Thr-451. 3 disulfides stabilise this stretch: Cys-534/Cys-578, Cys-538/Cys-583, and Cys-549/Cys-567. Cystine bridges form between Cys-678–Cys-723, Cys-682–Cys-728, Cys-693–Cys-712, Cys-800–Cys-844, Cys-804–Cys-849, Cys-815–Cys-832, and Cys-899–Cys-947. The region spanning 861–963 is the Ig-like C2-type 1 domain; it reads PHIAAARKVY…EHFVIKLIGG (103 aa). Positions 1120 to 1164 are disordered; the sequence is LKPSERRTSPVTLSPHKHVSGFSSSLRTSSTGDAGGGSRRPHRKP. Residues 1139-1151 show a composition bias toward low complexity; the sequence is SGFSSSLRTSSTG. 3 consecutive Ig-like C2-type domains span residues 1164-1266, 1286-1369, and 1395-1485; these read PTIL…IAVT, PAVT…TQLL, and PSVL…ASLV. Intrachain disulfides connect Cys-1202–Cys-1250, Cys-1308–Cys-1353, and Cys-1418–Cys-1469. 2 consecutive TSP type-1 domains span residues 1545-1608 and 1666-1726; these read CPSR…QLCV and CSVH…TPCE. A PLAC domain is found at 1726-1762; that stretch reads ENMECRDTTRYCEKVKQLKLCQLSQFKSRCCGTCGKA.

Monomer. In terms of processing, C-, N- and O-glycosylated. O-fucosylated by POFUT2 on a serine or a threonine residue found within the consensus sequence C1-X(2)-(S/T)-C2-G of the TSP type-1 repeat domains where C1 and C2 are the first and second cysteine residue of the repeat, respectively. Fucosylated repeats can then be further glycosylated by the addition of a beta-1,3-glucose residue by the glucosyltransferase, B3GALTL. Fucosylation mediates the efficient secretion of ADAMTSL1. Can also be C-glycosylated with one or two mannose molecules on tryptophan residues within the consensus sequence W-X-X-W of the TPRs, and N-glycosylated. These other glycosylations can also facilitate secretion. Post-translationally, disulfide bonds are present. As to expression, expressed primarily in adult skeletal muscle.

The protein resides in the secreted. It is found in the extracellular space. Its subcellular location is the extracellular matrix. This Homo sapiens (Human) protein is ADAMTS-like protein 1 (ADAMTSL1).